The following is a 637-amino-acid chain: CD2-associated protein (637 aa).

An SH3 1; truncated domain is found at 1–59 (MVDYIVEYDYDAVHDDELTIRVGEIIRNVKKLQEEGWLEGELNGRRGMFPDNFVKEIKR). Residues 1–175 (MVDYIVEYDY…ESTEDGETHN (175 aa)) are interaction with ANLN and localization to the midbody. Residue lysine 58 forms a Glycyl lysine isopeptide (Lys-Gly) (interchain with G-Cter in SUMO2) linkage. Residues serine 80 and serine 86 each carry the phosphoserine modification. The region spanning 108–167 (TKKRQCKVLFDYSPQNEDELELIVGDVIDVIEEVEEGWWSGTLNNKLGLFPSNFVKELES) is the SH3 2 domain. Residues 166–177 (ESTEDGETHNAQ) show a composition bias toward basic and acidic residues. Residues 166–209 (ESTEDGETHNAQEESEVPLTGPTSPLPSPGNGSEPAPGSVAQPK) form a disordered region. Serine 224 is modified (phosphoserine). The tract at residues 226 to 254 (KLRTRTSSSETEEKKTEKPLILQPLGSRT) is disordered. Positions 269–330 (KAKEYCRTLF…PDNFAVQISE (62 aa)) constitute an SH3 3 domain. Residues 333 to 455 (KDFPKPKKPP…KLDPEQLPVR (123 aa)) are disordered. Short sequence motifs (SH3-binding) lie at residues 336–352 (PKPK…APKP), 378–397 (KPSK…APTK), and 410–422 (PKRP…PPPP). Positions 341–351 (PPPPAKGPAPK) are enriched in pro residues. The span at 356-379 (AAEKKAFPLKAEEKDEKSLLEQKP) shows a compositional bias: basic and acidic residues. Positions 437-449 (IDTEPVSKPKLDP) are enriched in basic and acidic residues. Serine 458, serine 469, serine 510, and serine 514 each carry phosphoserine. The disordered stretch occupies residues 488–555 (HLTANRPKMP…SLSTPSSASK (68 aa)). Residues 517-539 (KTLKLPKEDDSGNLKPLEFKKDA) show a composition bias toward basic and acidic residues. Lysine 523 is covalently cross-linked (Glycyl lysine isopeptide (Lys-Gly) (interchain with G-Cter in SUMO2)). Residues 540 to 555 (SYSSKSSLSTPSSASK) show a composition bias toward low complexity. The residue at position 563 (threonine 563) is a Phosphothreonine. Residues 578–636 (RNSVDELRAQIIELLCIVDALKKDHGKELEKLRKELEEEKAMRSNLEVEIAKLKKAVLL) are a coiled coil. Serine 580 carries the phosphoserine modification.

In terms of assembly, homodimer. Interacts with F-actin, PKD2, NPHS1 and NPHS2. Interacts with WTIP. Interacts with DDN; interaction is direct. Interacts (via SH3 2 domain) with CBL (via phosphorylated C-terminus). Interacts with BCAR1/p130Cas (via SH3 domain). Interacts with MVB12A and ARHGAP17. Interacts with ANLN, CD2 and CBLB. Interacts with PDCD6IP and TSG101. Interacts with RIN3. Interacts directly with RET (inactive) and CBLC; upon RET activation by GDNF suggested to dissociate from RET as CBLC:CD2AP complex. Interacts with CGNL1 and SH3BP1; probably part of a complex at cell junctions. Interacts with CAPZA1. Phosphorylated on tyrosine residues; probably by c-Abl, Fyn and c-Src. Expressed in podocytes (at protein level).

Its subcellular location is the cytoplasm. It localises to the cytoskeleton. The protein resides in the cell projection. It is found in the ruffle. The protein localises to the cell junction. In terms of biological role, seems to act as an adapter protein between membrane proteins and the actin cytoskeleton. In collaboration with CBLC, modulates the rate of RET turnover and may act as regulatory checkpoint that limits the potency of GDNF on neuronal survival. Controls CBLC function, converting it from an inhibitor to a promoter of RET degradation. May play a role in receptor clustering and cytoskeletal polarity in the junction between T-cell and antigen-presenting cell. May anchor the podocyte slit diaphragm to the actin cytoskeleton in renal glomerolus. Also required for cytokinesis. Plays a role in epithelial cell junctions formation. In Mus musculus (Mouse), this protein is CD2-associated protein (Cd2ap).